The primary structure comprises 483 residues: Protein nucleotidyltransferase YdiU (483 aa).

8 residues coordinate ATP: Gly-81, Gly-83, Arg-84, Lys-103, Asp-115, Gly-116, Arg-166, and Arg-173. Asp-244 functions as the Proton acceptor in the catalytic mechanism. 2 residues coordinate Mg(2+): Asn-245 and Asp-254. Asp-254 serves as a coordination point for ATP.

It belongs to the SELO family. Mg(2+) serves as cofactor. Mn(2+) is required as a cofactor.

It carries out the reaction L-seryl-[protein] + ATP = 3-O-(5'-adenylyl)-L-seryl-[protein] + diphosphate. It catalyses the reaction L-threonyl-[protein] + ATP = 3-O-(5'-adenylyl)-L-threonyl-[protein] + diphosphate. The catalysed reaction is L-tyrosyl-[protein] + ATP = O-(5'-adenylyl)-L-tyrosyl-[protein] + diphosphate. The enzyme catalyses L-histidyl-[protein] + UTP = N(tele)-(5'-uridylyl)-L-histidyl-[protein] + diphosphate. It carries out the reaction L-seryl-[protein] + UTP = O-(5'-uridylyl)-L-seryl-[protein] + diphosphate. It catalyses the reaction L-tyrosyl-[protein] + UTP = O-(5'-uridylyl)-L-tyrosyl-[protein] + diphosphate. Functionally, nucleotidyltransferase involved in the post-translational modification of proteins. It can catalyze the addition of adenosine monophosphate (AMP) or uridine monophosphate (UMP) to a protein, resulting in modifications known as AMPylation and UMPylation. This Shewanella halifaxensis (strain HAW-EB4) protein is Protein nucleotidyltransferase YdiU.